Consider the following 408-residue polypeptide: Putative ankyrin repeat protein L483 (408 aa).

11 ANK repeats span residues 78–107 (SLNK…DIKA), 108–137 (GDDC…NIRA), 139–167 (NDYA…DIRA), 168–197 (NNDY…NIRT), 198–227 (ENDY…DIRA), 229–257 (NDYA…NIRV), 259–287 (NDYA…NIRA), 288–317 (RCDF…DIRS), 318–347 (QNDY…DIRT), 349–377 (DDYA…NIRA), and 378–407 (KDDY…VLTK).

The sequence is that of Putative ankyrin repeat protein L483 from Acanthamoeba polyphaga (Amoeba).